Reading from the N-terminus, the 353-residue chain is Protein disulfide isomerase CRELD2 (353 aa).

Residues 1 to 24 (MRLPRRAALGLLPLLLLLPPAPEA) form the signal peptide. Positions 31 to 34 (CHRC) match the CXXC motif. Disulfide bonds link Cys-31–Cys-34, Cys-140–Cys-154, Cys-148–Cys-166, and Cys-168–Cys-177. Residues 136–178 (DCLACQGGSQRPCSGNGHCSGDGSRQGDGSCRCHMGYQGPLCT) form the EGF-like 1 domain. The FU 1 repeat unit spans residues 193–240 (HSICTACDESCKTCSGLTNRDCGECEVGWVLDEGACVDVDECAAEPPP). An N-linked (GlcNAc...) asparagine glycan is attached at Asn-251. One copy of the FU 2 repeat lies at 253–302 (SYTCEECDSSCVGCTGEGPGNCKECISGYAREHGQCADVDECSLAEKTCV). Positions 263 to 266 (CVGC) match the CXXC motif. 4 disulfide bridges follow: Cys-263–Cys-266, Cys-294–Cys-308, Cys-301–Cys-317, and Cys-319–Cys-330. In terms of domain architecture, EGF-like 2; calcium-binding spans 290 to 331 (DVDECSLAEKTCVRKNENCYNTPGSYVCVCPDGFEETEDACV). The tract at residues 332–353 (PPAEAEATEGESPTQLPSREDL) is disordered. Polar residues predominate over residues 342-353 (ESPTQLPSREDL).

The protein belongs to the CRELD family. In terms of assembly, interacts with CHRNA4. Component of a complex containing at least CRELD2, MANF, MATN3 and PDIA4. As to expression, ubiquitously expressed. Highly expressed in skeletal muscle, heart, liver, kidney and placenta.

The protein localises to the endoplasmic reticulum. The enzyme catalyses Catalyzes the rearrangement of -S-S- bonds in proteins.. In terms of biological role, protein disulfide isomerase. Might play a role in the unfolded protein response. May regulate transport of alpha4-beta2 neuronal acetylcholine receptor. This Homo sapiens (Human) protein is Protein disulfide isomerase CRELD2 (CRELD2).